The chain runs to 2590 residues: DNA polymerase theta (2590 aa).

Positions 1–12 (MNLLRRSGKRRR) are enriched in basic residues. Residues 1–33 (MNLLRRSGKRRRSESGSDSFSGSGGDSSASPQF) form a disordered region. Low complexity predominate over residues 16–30 (GSDSFSGSGGDSSAS). Residues Q96 and 115-122 (APTSAGKT) each bind ATP. In terms of domain architecture, Helicase ATP-binding spans 102–286 (LGQVLEGKNL…WLNAELYHTD (185 aa)). The interval 102-554 (LGQVLEGKNL…STSQDMHTYA (453 aa)) is helicase activity. Residues 216-219 (DELH) carry the DEAH box motif. The Helicase C-terminal domain maps to 321 to 554 (GDEDHVVSLC…STSQDMHTYA (234 aa)). Positions 847–894 (DEEEEAVEERRNMRTIWVTGRKGLTEREAAALIVEEARMILQQDLVEM) are interaction with RAD51. The residue at position 990 (K990) is an N6-acetyllysine. The interval 1034-1060 (KMSRSFRSWKRRKHLKRSRDSSPLKDS) is disordered. Basic residues predominate over residues 1040 to 1050 (RSWKRRKHLKR). Phosphoserine; by PLK1 occurs at positions 1289, 1482, 1486, 1488, 1493, 1555, and 1563. The interval 1594-1622 (SDPVLDEHHQGDQDGGDQDERAEKSKLTG) is disordered. Residues 1598–1619 (LDEHHQGDQDGGDQDERAEKSK) are compositionally biased toward basic and acidic residues. Residues S1628 and S1635 each carry the phosphoserine; by PLK1 modification. Phosphothreonine; by PLK1 is present on T1755. The interval 1777–1797 (PSDIKNHDLSPGSRNGFKDNS) is disordered. Residues 2097-2584 (AECESQKHIM…KVKIGASWGE (488 aa)) are DNA polymerase activity. Loop regions lie at residues 2142-2177 (KLPPNREMKNQGSKKTLGSTRRGIDNGRKLRLGRQF) and 2257-2322 (EIKM…VPFP). Positions 2330 and 2331 each coordinate Mg(2+). The interval 2491–2535 (QLETFHSTFKSHGHREGMLQSDQTGLSRKRKLQGMFCPIRGGFFI) is loop 3. Position 2540 (D2540) interacts with Mg(2+).

Belongs to the DNA polymerase type-A family. In terms of assembly, homomultimer; forms homodimers and homotetramers. Interacts with RAD51. Interacts with ORC2 and ORC4. Interacts with RHNO1; interaction takes place during mitosis and promotes POLQ recruitment to DNA damage sites. Interacts (when phosphorylated) with TOPBP1 (via BRCT domains 7 and 8); promoting POLQ recruitment to DNA damage sites. Requires Mg(2+) as cofactor. In terms of processing, phosphorylated by PLK1; promoting interaction with TOPBP1 and recruitment to DNA damage sites. As to expression, highly expressed in testis.

It localises to the nucleus. The protein localises to the chromosome. It carries out the reaction DNA(n) + a 2'-deoxyribonucleoside 5'-triphosphate = DNA(n+1) + diphosphate. The enzyme catalyses ATP + H2O = ADP + phosphate + H(+). Its activity is regulated as follows. Specifically inhibited by the antibiotic novobiocin. The polymerase activity is specifically inhibited by the small molecule ART558. Novobiocin and ART558 confer specific killing of BRCA1/2-deficient cells and synergize with the poly [ADP-ribose] polymerase (PARP) inhibitor olaparib. Its function is as follows. Low-fidelity DNA polymerase with a helicase activity that promotes microhomology-mediated end-joining (MMEJ), an alternative non-homologous end-joining (NHEJ) machinery required to repair double-strand breaks in DNA during mitosis. MMEJ is an error-prone repair pathway that produces deletions of sequences from the strand being repaired and promotes genomic rearrangements, such as telomere fusions, some of them leading to cellular transformation. MMEJ is required during mitosis to repair persistent double-strand breaks that originate in S-phase. Although error-prone, MMEJ protects against chromosomal instability and tumorigenesis. The polymerase acts by binding directly the 2 ends of resected double-strand breaks, allowing microhomologous sequences in the overhangs to form base pairs. It then extends each strand from the base-paired region using the opposing overhang as a template. Requires partially resected DNA containing 2 to 6 base pairs of microhomology to perform MMEJ. The polymerase lacks proofreading activity and is highly promiscuous: unlike most polymerases, promotes extension of ssDNA and partial ssDNA (pssDNA) substrates. When the ends of a break do not contain terminal microhomology must identify embedded complementary sequences through a scanning step. Also acts as a DNA helicase, promoting dissociation of the replication protein A complex (RPA/RP-A), composed of RPA1, RPA2 and RPA3, from resected double-strand breaks to allow their annealing and subsequent joining by MMEJ. Removal of RPA/RP-A complex proteins prevents RAD51 accumulation at resected ends, thereby inhibiting homology-recombination repair (HR) pathway. Also shows RNA-directed DNA polymerase activity to mediate DNA repair in vitro; however this activity needs additional evidence in vivo. May also have lyase activity. Involved in somatic hypermutation of immunoglobulin genes, a process that requires the activity of DNA polymerases to ultimately introduce mutations at both A/T and C/G base pairs. POLQ-mediated end joining activity is involved in random integration of exogenous DNA hampers. The protein is DNA polymerase theta of Homo sapiens (Human).